The following is a 1092-amino-acid chain: Fibrinogen-binding protein (1092 aa).

An N-terminal signal peptide occupies residues 1-51; that stretch reads MINKKNNLLTKKKPIANKSNKYAIRKFTVGTASIVIGATLLFGLGHNEAKA. Basic and acidic residues predominate over residues 50–63; that stretch reads KAEENSVQDVKDSN. Residues 50–236 are disordered; that stretch reads KAEENSVQDV…GYTNIDEKIS (187 aa). Residues 52–599 are ligand binding A region; it reads EENSVQDVKD…GQGQGDLPPE (548 aa). Residues 64–76 show a composition bias toward acidic residues; the sequence is TDDELSDSNDQSS. The span at 84–98 shows a compositional bias: low complexity; the sequence is INNNQSINTDDNNQI. Residues 99–119 show a composition bias toward basic and acidic residues; that stretch reads IKKEETNNYDGIEKRSEDRTE. The segment covering 120-140 has biased composition (polar residues); that stretch reads STTNVDENEATFLQKTPQDNT. The segment covering 141 to 151 has biased composition (basic and acidic residues); sequence HLTEEEVKESS. A compositionally biased stretch (polar residues) spans 160-170; sequence IDTAQQPSHTT. A compositionally biased stretch (basic and acidic residues) spans 195–220; it reads KIKESNTESGKEENTIEQPNKVKEDS. Glu294, Ser299, Val302, and Glu309 together coordinate Ca(2+). The interval 579 to 590 is interaction with human fibrinogen; that stretch reads YDNTIAFSTSSG. 2 CNA-B domains span residues 600–713 and 714–824; these read KTYK…YQTP and KYSL…YDDE. The tract at residues 780–1068 is disordered; it reads KPSGMTQTTT…NEDYGSKGTL (289 aa). Positions 791 to 801 are enriched in acidic residues; sequence SGDDDEQDADG. A compositionally biased stretch (basic and acidic residues) spans 802-814; the sequence is EEVHVTITDHDDF. Residues 820–1039 are compositionally biased toward acidic residues; the sequence is YYDDESDSDS…DSDSDSDNDS (220 aa). An LPXTG sorting signal motif is present at residues 1053–1057; it reads LPDTG. The residue at position 1056 (Thr1056) is a Pentaglycyl murein peptidoglycan amidated threonine. Positions 1057–1092 are cleaved as a propeptide — removed by sortase; that stretch reads GANEDYGSKGTLLGTLFAGLGALLLGKRRKNRKNKN.

Belongs to the serine-aspartate repeat-containing protein (SDr) family.

The protein localises to the secreted. Its subcellular location is the cell wall. Functionally, promotes bacterial attachment to both soluble and immobilized forms of fibrinogen in a dose-dependent manner. This binding occurs through the beta-chain of human fibrinogen. Could contribute to the initiation of foreign-body infection by allowing bacteria to adhere to biomaterial surfaces that have become coated with host proteins after implantation. Is important in the pathogenesis of central venous catheter (CVC)-associated infection model. The chain is Fibrinogen-binding protein (fbe) from Staphylococcus epidermidis.